The following is a 156-amino-acid chain: ATP synthase subunit b (156 aa).

Residues 12 to 32 (LAFAIFVWFCMKLVWPPITAA) form a helical membrane-spanning segment.

The protein belongs to the ATPase B chain family. As to quaternary structure, F-type ATPases have 2 components, F(1) - the catalytic core - and F(0) - the membrane proton channel. F(1) has five subunits: alpha(3), beta(3), gamma(1), delta(1), epsilon(1). F(0) has three main subunits: a(1), b(2) and c(10-14). The alpha and beta chains form an alternating ring which encloses part of the gamma chain. F(1) is attached to F(0) by a central stalk formed by the gamma and epsilon chains, while a peripheral stalk is formed by the delta and b chains.

It localises to the cell inner membrane. Its function is as follows. F(1)F(0) ATP synthase produces ATP from ADP in the presence of a proton or sodium gradient. F-type ATPases consist of two structural domains, F(1) containing the extramembraneous catalytic core and F(0) containing the membrane proton channel, linked together by a central stalk and a peripheral stalk. During catalysis, ATP synthesis in the catalytic domain of F(1) is coupled via a rotary mechanism of the central stalk subunits to proton translocation. Component of the F(0) channel, it forms part of the peripheral stalk, linking F(1) to F(0). This Stutzerimonas stutzeri (strain A1501) (Pseudomonas stutzeri) protein is ATP synthase subunit b.